The chain runs to 383 residues: Chitinase-3-like protein 1 (383 aa).

The first 21 residues, M1–A21, serve as a signal peptide directing secretion. Residues Y22 to V383 enclose the GH18 domain. Cysteines 26 and 51 form a disulfide. The N-linked (GlcNAc...) asparagine glycan is linked to N60. Residues E70–W71, G97–N100, Y141, L204–D207, and R263 contribute to the chitin site. Residues C300 and C364 are joined by a disulfide bond. An important for AKT1 activation and IL8 production region spans residues Q324–A338. Residue W352 participates in chitin binding. N367 carries an N-linked (GlcNAc...) asparagine glycan.

The protein belongs to the glycosyl hydrolase 18 family. Monomer. Post-translationally, glycosylated. In terms of tissue distribution, mammary secretions collected during the non-lactating period.

The protein localises to the secreted. It localises to the extracellular space. Its subcellular location is the cytoplasm. The protein resides in the perinuclear region. It is found in the endoplasmic reticulum. Functionally, carbohydrate-binding lectin with a preference for chitin. Has no chitinase activity. May play a role in tissue remodeling and in the capacity of cells to respond to and cope with changes in their environment. Plays a role in T-helper cell type 2 (Th2) inflammatory response and IL-13-induced inflammation, regulating allergen sensitization, inflammatory cell apoptosis, dendritic cell accumulation and M2 macrophage differentiation. Facilitates invasion of pathogenic enteric bacteria into colonic mucosa and lymphoid organs. Mediates activation of AKT1 signaling pathway and subsequent IL8 production in colonic epithelial cells. Regulates antibacterial responses in lung by contributing to macrophage bacterial killing, controlling bacterial dissemination and augmenting host tolerance. Also regulates hyperoxia-induced injury, inflammation and epithelial apoptosis in lung. In Bos taurus (Bovine), this protein is Chitinase-3-like protein 1 (CHI3L1).